The following is a 204-amino-acid chain: Ribonuclease HII (204 aa).

Residues 8–197 form the RNase H type-2 domain; that stretch reads RLICGVDEAG…VRELLQNPPL (190 aa). Residues Asp-14, Glu-15, and Asp-106 each coordinate a divalent metal cation.

This sequence belongs to the RNase HII family. It depends on Mn(2+) as a cofactor. Mg(2+) is required as a cofactor.

It is found in the cytoplasm. The catalysed reaction is Endonucleolytic cleavage to 5'-phosphomonoester.. Its function is as follows. Endonuclease that specifically degrades the RNA of RNA-DNA hybrids. The sequence is that of Ribonuclease HII from Azoarcus sp. (strain BH72).